A 951-amino-acid polypeptide reads, in one-letter code: MASKTPSSSSSRRPRNVGVGSFTINEEIGKGSFATVYRGTHVPSGSLVAIKSVNLGRLNKKLKDNLYVEIEILKSLHHPHIVALMDCRESTSHIHLMMEYCELGDLSYFIKKRDKLADNPSLFDMIRKYPMPVDGGLNQVVVRHFFKQLSSAMEFLRDRDFVHRDVKPQNLLLIPSPDWMAKSKNGPEAMKASKESIVPMVGINSLPMLKLADFGFARSLPSTSLAETLCGSPLYMAPEILRYEKYDARADLWSIGTVLYEMMTGKPPFRAANHVELLRKIEQNEDEIRFPSKTVFSRDLKDIARRFLKKRPEDRITFPEYFAHPVVTGPIPGLVGEDLPKEIITPSRSPEASVARHPSLRERQRENPTPKPVETTYESLIARDIGEQAPRSPHIEANQPVEIPGHKSGRPGSRDRPSAISAATAPNVDTLPRQRDRTERHYAPIGRPVSRKPSYDEQANLPVQEEIRSSDSITEAEQDVRDAREYVLVEKKAVEVNAFADEMAASPRLAHANHIPKQPTRRHTSMGAPNSTSGAVAVPPSRAVQKAQGNTRPDTSSARNSYGSYGKTGSSPSTASAIAKALQGASVRVFGVSWSPTLIGKGPSPQQLYNPYPAYPTPNTGFIGDARPIDEDQRVVNVIEDSATRSDVVYGFAEVKYRQLIPLAPSMNHGLGGPNNEKVGDAMDEDDGLTVEAIVNLSEEALVLYVKSLSLLSKSMDIAGAWWLRKNRGGVISGGHTPGSDSSSAVQAGNRINGAVQWVRTRFNEVLEKAELVRLKLVEAQKRLPEDHPGHPSNHATASKIVGGSSTTDGVVLSSGITAEKLMYDRALEMSRTAAINELANEDLPGCEISYTTAIRMLEAVLENDEELIPRKRSPSLREDKEKCDGGEVNGINFGDRKDVLKVLQMIRTRLHVLKKKMAVIARHQSMPPPSSPRHSHSGGTTPTIANTPPH.

The Protein kinase domain occupies 22–327 (FTINEEIGKG…FPEYFAHPVV (306 aa)). Residues 28 to 36 (IGKGSFATV) and Lys51 contribute to the ATP site. Asp165 serves as the catalytic Proton acceptor. Disordered stretches follow at residues 343–375 (IITPSRSPEASVARHPSLRERQRENPTPKPVET), 387–458 (EQAP…YDEQ), 514–573 (HIPK…SSPS), and 924–951 (HQSMPPPSSPRHSHSGGTTPTIANTPPH). Basic and acidic residues-rich tracts occupy residues 359-368 (SLRERQRENP) and 432-442 (PRQRDRTERHY). 2 stretches are compositionally biased toward polar residues: residues 547-573 (AQGNTRPDTSSARNSYGSYGKTGSSPS) and 939-951 (GGTTPTIANTPPH).

Belongs to the protein kinase superfamily. Ser/Thr protein kinase family. APG1/unc-51/ULK1 subfamily. As to quaternary structure, homodimer. Forms a ternary complex with ATG13 and ATG17.

The protein resides in the cytoplasm. It is found in the preautophagosomal structure membrane. It catalyses the reaction L-seryl-[protein] + ATP = O-phospho-L-seryl-[protein] + ADP + H(+). The enzyme catalyses L-threonyl-[protein] + ATP = O-phospho-L-threonyl-[protein] + ADP + H(+). Functionally, serine/threonine protein kinase involved in the cytoplasm to vacuole transport (Cvt) and found to be essential in autophagy, where it is required for the formation of autophagosomes. Involved in the clearance of protein aggregates which cannot be efficiently cleared by the proteasome. Required for selective autophagic degradation of the nucleus (nucleophagy) as well as for mitophagy which contributes to regulate mitochondrial quantity and quality by eliminating the mitochondria to a basal level to fulfill cellular energy requirements and preventing excess ROS production. Also involved in endoplasmic reticulum-specific autophagic process, in selective removal of ER-associated degradation (ERAD) substrates. Plays a key role in ATG9 and ATG23 cycling through the pre-autophagosomal structure and is necessary to promote ATG18 binding to ATG9 through phosphorylation of ATG9. Catalyzes phosphorylation of ATG4, decreasing the interaction between ATG4 and ATG8 and impairing deconjugation of PE-conjugated forms of ATG8. The chain is Serine/threonine-protein kinase ATG1 from Sclerotinia sclerotiorum (strain ATCC 18683 / 1980 / Ss-1) (White mold).